The sequence spans 406 residues: MRLFQSTCVLVGTVLPLFTAFPISSPREIEIIPDKYIITFKKGIDQAAIEAHTAWVSSVQARNTARGFTTAETPGLERMFSIHNFNAYSGSFDRETIEEIRSHPNVESVEPDSMAYVTELIEQRNATYGPRRISHREIPTGDNSYWYDSKAGEGSFVYIMDTGINKAHVDFEGRAIPGVNLHDVAFDDTHGHGSHCAGIAGSKTYGVAKKATIVDVKVFTRGGGAWSLLMGGLDWSVKNITGEDRQAKSAVSISISGPTNQAMNNAVKAAVEAGVTVVVASGNDGRDAGRNSPGSAPESITVGSINSRRGMDTRSSFSNYGSSVAIHAPGEGIISTYKGSRDATANMSGTSMAAPHVAGLIAYLQSIHDLPDPAAARRKLLELATSDKIQDVRGSANKLAYNGSGK.

The signal sequence occupies residues 1 to 20 (MRLFQSTCVLVGTVLPLFTA). A propeptide spanning residues 21 to 118 (FPISSPREIE…VEPDSMAYVT (98 aa)) is cleaved from the precursor. The Inhibitor I9 domain maps to 35-115 (KYIITFKKGI…VESVEPDSMA (81 aa)). N125 is a glycosylation site (N-linked (GlcNAc...) asparagine). One can recognise a Peptidase S8 domain in the interval 127–406 (TYGPRRISHR…NKLAYNGSGK (280 aa)). Residues D161 and H192 each act as charge relay system in the active site. N-linked (GlcNAc...) asparagine glycosylation occurs at N239. Residues 283-309 (NDGRDAGRNSPGSAPESITVGSINSRR) are disordered. An N-linked (GlcNAc...) asparagine glycan is attached at N346. Catalysis depends on S351, which acts as the Charge relay system. N-linked (GlcNAc...) asparagine glycosylation is present at N402.

Belongs to the peptidase S8 family.

It is found in the secreted. Secreted subtilisin-like serine protease with keratinolytic activity that contributes to pathogenicity. This chain is Subtilisin-like protease CPC735_023170, found in Coccidioides posadasii (strain C735) (Valley fever fungus).